A 559-amino-acid chain; its full sequence is Membrane protein insertase YidC (559 aa).

The chain crosses the membrane as a helical span at residues 6–26; sequence TVLWMIFSFSLLLLWNNWQIH. Positions 34–80 are disordered; it reads GGPSPEQNAPATANNQAATNPASNTPAVPNAPAATSAPSSVPGSTAP. Over residues 42–80 the composition is skewed to low complexity; that stretch reads APATANNQAATNPASNTPAVPNAPAATSAPSSVPGSTAP. Helical transmembrane passes span 367–387, 441–461, 480–500, and 510–530; these read LLGNWGWTIVALTVIIKAVFY, LPMVVQIPVFIALYWVLLASV, PYFILPAVMMATMFLQIKLNP, and VMMVMPLVFGGMMFFFPAGLV.

It belongs to the OXA1/ALB3/YidC family. Type 1 subfamily. In terms of assembly, interacts with the Sec translocase complex via SecD. Specifically interacts with transmembrane segments of nascent integral membrane proteins during membrane integration.

The protein resides in the cell inner membrane. In terms of biological role, required for the insertion and/or proper folding and/or complex formation of integral membrane proteins into the membrane. Involved in integration of membrane proteins that insert both dependently and independently of the Sec translocase complex, as well as at least some lipoproteins. Aids folding of multispanning membrane proteins. In Bordetella avium (strain 197N), this protein is Membrane protein insertase YidC.